A 297-amino-acid chain; its full sequence is uncharacterized protein (297 aa).

An HTH lysR-type domain is found at 1 to 60 (MNIELRHLRYFVAVAEELHFGRAAARLNISQPPLSQQIQALEQQIGARLLARTNRSVLLT). A DNA-binding region (H-T-H motif) is located at residues 20–40 (FGRAAARLNISQPPLSQQIQA).

Belongs to the LysR transcriptional regulatory family.

This is an uncharacterized protein from Escherichia coli (strain K12).